The chain runs to 37 residues: Large ribosomal subunit protein bL36c (37 aa).

The protein belongs to the bacterial ribosomal protein bL36 family.

It is found in the plastid. It localises to the chloroplast. This chain is Large ribosomal subunit protein bL36c, found in Phaeodactylum tricornutum (strain CCAP 1055/1).